Consider the following 387-residue polypeptide: Putative protein FAM157C (387 aa).

3 disordered regions span residues 1–21 (MGPLFTTIPGAHSGPMRPLPK), 182–226 (TARP…GAEP), and 329–353 (RARDPAPTNFPLKCQKQRGASTSSG).

The protein belongs to the FAM157 family.

In Homo sapiens (Human), this protein is Putative protein FAM157C (FAM157C).